The sequence spans 300 residues: Epimerase family protein SACOL0834 (300 aa).

Belongs to the NAD(P)-dependent epimerase/dehydratase family. SDR39U1 subfamily.

In Staphylococcus aureus (strain COL), this protein is Epimerase family protein SACOL0834.